A 351-amino-acid chain; its full sequence is Nicotinate-nucleotide--dimethylbenzimidazole phosphoribosyltransferase (351 aa).

The active-site Proton acceptor is Glu-317.

This sequence belongs to the CobT family.

The catalysed reaction is 5,6-dimethylbenzimidazole + nicotinate beta-D-ribonucleotide = alpha-ribazole 5'-phosphate + nicotinate + H(+). It functions in the pathway nucleoside biosynthesis; alpha-ribazole biosynthesis; alpha-ribazole from 5,6-dimethylbenzimidazole: step 1/2. Its function is as follows. Catalyzes the synthesis of alpha-ribazole-5'-phosphate from nicotinate mononucleotide (NAMN) and 5,6-dimethylbenzimidazole (DMB). This is Nicotinate-nucleotide--dimethylbenzimidazole phosphoribosyltransferase from Pseudomonas aeruginosa (strain UCBPP-PA14).